The sequence spans 656 residues: Probable serine/threonine-protein kinase sky1 (656 aa).

Residues 1 to 127 (MSDIQQDSTS…KQGGYHPVRR (127 aa)) form a disordered region. Gly residues predominate over residues 16–48 (TSLGGTSLGGTSLGGTSLGGTSLGGTSLGGTSL). 2 stretches are compositionally biased toward low complexity: residues 49–64 (GGST…STNS) and 72–89 (TSSN…NNNE). Residues 96–108 (AGSSNKSFMPLNN) show a composition bias toward polar residues. In terms of domain architecture, Protein kinase spans 135 to 648 (YQVVDKLGWG…AKDCLNHTWL (514 aa)). 141–149 (LGWGHFSTV) contributes to the ATP binding site. Positions 157–185 (TPITTSSSSSSTTTTTTSSSSNGNGNGNG) are disordered. Low complexity predominate over residues 160–179 (TTSSSSSSTTTTTTSSSSNG). Lys197 contacts ATP. Residue Asp298 is the Proton acceptor of the active site. A disordered region spans residues 330–454 (RTSSSNKQSQ…TTATATATTT (125 aa)). Over residues 332–355 (SSSNKQSQQQQQPQQQQSQQNIND) the composition is skewed to low complexity. Basic and acidic residues-rich tracts occupy residues 383–401 (SNRD…DDNK) and 413–440 (ENTD…KEEP). Low complexity predominate over residues 441 to 454 (TTTTTTATATATTT).

Belongs to the protein kinase superfamily. CMGC Ser/Thr protein kinase family.

It catalyses the reaction L-seryl-[protein] + ATP = O-phospho-L-seryl-[protein] + ADP + H(+). The enzyme catalyses L-threonyl-[protein] + ATP = O-phospho-L-threonyl-[protein] + ADP + H(+). The protein is Probable serine/threonine-protein kinase sky1 (sky1) of Dictyostelium discoideum (Social amoeba).